Here is a 402-residue protein sequence, read N- to C-terminus: Advanced glycosylation end product-specific receptor (402 aa).

The N-terminal stretch at 1 to 22 is a signal peptide; the sequence is MPTGTVARAWVLVLALWGAVAG. The Ig-like V-type domain occupies 23 to 109; sequence GQNITARIGE…ATNRLGKEVK (87 aa). At 23 to 341 the chain is on the extracellular side; the sequence is GQNITARIGE…DGSGLGTLAL (319 aa). Residues N25 and N80 are each glycosylated (N-linked (GlcNAc...) asparagine). Disulfide bonds link C38–C98 and C143–C206. Ig-like C2-type domains lie at 123–219 and 233–315; these read PEIV…RPLN and PEGI…PPVN. The helical transmembrane segment at 342–362 threads the bilayer; it reads ALGILGGLGIAALLIGAILWR. Residues 363–402 lie on the Cytoplasmic side of the membrane; that stretch reads KRQPRLEERKAPESQEDEEERAELNQSEEAEMPENGAGGP. Residues 368 to 402 form a disordered region; that stretch reads LEERKAPESQEDEEERAELNQSEEAEMPENGAGGP. Phosphoserine occurs at positions 376 and 389. Acidic residues predominate over residues 376–394; that stretch reads SQEDEEERAELNQSEEAEM.

As to quaternary structure, constitutive homodimer; disulfide-linked. Forms homooligomers. Interacts with S100A1 and APP. Interacts with S100B, S100A12 and S100A14. Interacts with TIRAP. Interacts with HMGB1. Interacts with LGP2; this interaction plays an important role in AGER-mediated pro-inflammatory responses and cytokine release. Interacts with double-strand break repair protein MRE11 which is a core component of the MRN complex; the interaction enhances MRE11 endonuclease activity and promotes DNA repair. Interacts with the MCM2-7 complex via interaction with complex member MCM2; the interaction is increased following DNA replication stress and stabilizes the MCM2-7 complex at replication forks. In terms of processing, phosphorylated on its cytoplasmic domain by PKCzeta/PRKCZ upon ligand binding. Phosphorylated by ATM following DNA damage. Targeted by the ubiquitin E3 ligase subunit FBXO10 to mediate its ubiquitination and degradation. As to expression, endothelial cells and cardiomyocytes. Expressed in brain.

The protein resides in the cell membrane. The protein localises to the cell projection. It localises to the phagocytic cup. Its subcellular location is the early endosome. It is found in the nucleus. In terms of biological role, cell surface pattern recognition receptor that senses endogenous stress signals with a broad ligand repertoire including advanced glycation end products, S100 proteins, high-mobility group box 1 protein/HMGB1, amyloid beta/APP oligomers, nucleic acids, histones, phospholipids and glycosaminoglycans. Advanced glycosylation end products are nonenzymatically glycosylated proteins which accumulate in vascular tissue in aging and at an accelerated rate in diabetes. These ligands accumulate at inflammatory sites during the pathogenesis of various diseases including diabetes, vascular complications, neurodegenerative disorders and cancers, and RAGE transduces their binding into pro-inflammatory responses. Upon ligand binding, uses TIRAP and MYD88 as adapters to transduce the signal ultimately leading to the induction of inflammatory cytokines IL6, IL8 and TNFalpha through activation of NF-kappa-B. Interaction with S100A12 on endothelium, mononuclear phagocytes, and lymphocytes triggers cellular activation, with generation of key pro-inflammatory mediators. Interaction with S100B after myocardial infarction may play a role in myocyte apoptosis by activating ERK1/2 and p53/TP53 signaling. Contributes to the translocation of amyloid-beta peptide (ABPP) across the cell membrane from the extracellular to the intracellular space in cortical neurons. ABPP-initiated RAGE signaling, especially stimulation of p38 mitogen-activated protein kinase (MAPK), has the capacity to drive a transport system delivering ABPP as a complex with RAGE to the intraneuronal space. Participates in endothelial albumin transcytosis together with HMGB1 through the RAGE/SRC/Caveolin-1 pathway, leading to endothelial hyperpermeability. Mediates the loading of HMGB1 in extracellular vesicles (EVs) that shuttle HMGB1 to hepatocytes by transferrin-mediated endocytosis and subsequently promote hepatocyte pyroptosis by activating the NLRP3 inflammasome. Binds to DNA and promotes extracellular hypomethylated DNA (CpG DNA) uptake by cells via the endosomal route to activate inflammatory responses. Mediates phagocytosis by non-professional phagocytes (NPP) and this is enhanced by binding to ligands including RNA, DNA, HMGB1 and histones. Promotes NPP-mediated phagocytosis of Saccharomyces cerevisiae spores by binding to RNA attached to the spore wall. Also promotes NPP-mediated phagocytosis of apoptotic cells. Following DNA damage, recruited to DNA double-strand break sites where it colocalizes with the MRN repair complex via interaction with double-strand break repair protein MRE11. Enhances the endonuclease activity of MRE11, promoting the end resection of damaged DNA. Promotes DNA damage repair in trophoblasts which enhances trophoblast invasion and contributes to placental development and maintenance. Protects cells from DNA replication stress by localizing to damaged replication forks where it stabilizes the MCM2-7 complex and promotes faithful progression of the replication fork. In Rattus norvegicus (Rat), this protein is Advanced glycosylation end product-specific receptor (Ager).